The following is an 865-amino-acid chain: FO synthase (865 aa).

Residues 1–21 (MIEGVTELATPNVPPAPPSPS) form a disordered region. Radical SAM core domains follow at residues 76 to 320 (ITYS…LGPD) and 544 to 785 (VTYV…DNIQ). The cofG-like stretch occupies residues 77 to 409 (TYSRNVFIPL…PRIGAHVAAL (333 aa)). [4Fe-4S] cluster-binding residues include Cys90, Cys94, Cys97, Cys558, Cys562, and Cys565. The interval 521 to 854 (DGAELDAVAA…RERTTVYGRV (334 aa)) is cofH-like.

In the N-terminal section; belongs to the radical SAM superfamily. CofG family. It in the C-terminal section; belongs to the radical SAM superfamily. CofH family. Requires [4Fe-4S] cluster as cofactor.

It catalyses the reaction 5-amino-6-(D-ribitylamino)uracil + L-tyrosine + S-adenosyl-L-methionine = 5-amino-5-(4-hydroxybenzyl)-6-(D-ribitylimino)-5,6-dihydrouracil + 2-iminoacetate + 5'-deoxyadenosine + L-methionine + H(+). The catalysed reaction is 5-amino-5-(4-hydroxybenzyl)-6-(D-ribitylimino)-5,6-dihydrouracil + S-adenosyl-L-methionine = 7,8-didemethyl-8-hydroxy-5-deazariboflavin + 5'-deoxyadenosine + L-methionine + NH4(+) + H(+). It functions in the pathway cofactor biosynthesis; coenzyme F0 biosynthesis. Functionally, catalyzes the radical-mediated synthesis of 7,8-didemethyl-8-hydroxy-5-deazariboflavin (FO) from 5-amino-6-(D-ribitylamino)uracil and L-tyrosine. This chain is FO synthase (fbiC), found in Nocardia farcinica (strain IFM 10152).